The chain runs to 507 residues: E3 ubiquitin-protein ligase TRIM31 (507 aa).

Residues 16-56 (CPICMEILQDPVTIDCGHNFCLQCISQVGKTSEKIQCPLCK) form an RING-type zinc finger. The B box-type zinc-finger motif lies at 89–130 (KEDSRCQRHKEKLHYFCEQDGAFLCVVCRDSKDHKSHNVTLI). The Zn(2+) site is built by C94, H97, C116, and H122. Coiled-coil stretches lie at residues 176–241 (EKLK…LQSS) and 269–298 (EDLE…DMNA). The B30.2/SPRY domain occupies 315–507 (EKESWSLLQK…VACSHITLSP (193 aa)).

It belongs to the TRIM/RBCC family. As to quaternary structure, may form oligomers. Interacts with isoform p52shc of SHC1. Auto-ubiquitinated (in vitro). Highly expressed in the gastrointestrinal tract, with high expression in the small intestine, moderate in the large intestine and weak in the stomach and esophagus.

Its subcellular location is the cytoplasm. It localises to the mitochondrion. It carries out the reaction S-ubiquitinyl-[E2 ubiquitin-conjugating enzyme]-L-cysteine + [acceptor protein]-L-lysine = [E2 ubiquitin-conjugating enzyme]-L-cysteine + N(6)-ubiquitinyl-[acceptor protein]-L-lysine.. It participates in protein modification; protein ubiquitination. Its function is as follows. E3 ubiquitin-protein ligase that acts as a regulator of antiviral immune response and inflammation by mediating ubiquitination of substrates. Acts as a regulator of innate immune defense against viruses by mediating 'Lys-63'-linked ubiquitination of MAVS, promoting MAVS polymerization and formation of three-stranded helical filaments on mitochondria. Acts as a negative regulator of the NLRP3 inflammasome by catalyzing 'Lys-48'-linked ubiquitination of NLRP3, leading to its degradation. Regulator of Src-induced anchorage independent cell growth. The sequence is that of E3 ubiquitin-protein ligase TRIM31 from Mus musculus (Mouse).